The sequence spans 507 residues: ATP synthase subunit alpha, chloroplastic (507 aa).

170 to 177 (GDRQTGKT) contacts ATP.

Belongs to the ATPase alpha/beta chains family. F-type ATPases have 2 components, CF(1) - the catalytic core - and CF(0) - the membrane proton channel. CF(1) has five subunits: alpha(3), beta(3), gamma(1), delta(1), epsilon(1). CF(0) has four main subunits: a, b, b' and c.

The protein resides in the plastid. It is found in the chloroplast thylakoid membrane. The enzyme catalyses ATP + H2O + 4 H(+)(in) = ADP + phosphate + 5 H(+)(out). Its function is as follows. Produces ATP from ADP in the presence of a proton gradient across the membrane. The alpha chain is a regulatory subunit. The protein is ATP synthase subunit alpha, chloroplastic of Nicotiana tomentosiformis (Tobacco).